We begin with the raw amino-acid sequence, 123 residues long: uncharacterized protein (123 aa).

This is an uncharacterized protein from Human cytomegalovirus (strain AD169) (HHV-5).